A 234-amino-acid polypeptide reads, in one-letter code: Carboxy-S-adenosyl-L-methionine synthase (234 aa).

S-adenosyl-L-methionine contacts are provided by residues Tyr35, 60-62 (GSS), 83-84 (DN), Asn124, and Arg191.

This sequence belongs to the class I-like SAM-binding methyltransferase superfamily. Cx-SAM synthase family. Homodimer.

It carries out the reaction prephenate + S-adenosyl-L-methionine = carboxy-S-adenosyl-L-methionine + 3-phenylpyruvate + H2O. Catalyzes the conversion of S-adenosyl-L-methionine (SAM) to carboxy-S-adenosyl-L-methionine (Cx-SAM). The protein is Carboxy-S-adenosyl-L-methionine synthase of Nautilia profundicola (strain ATCC BAA-1463 / DSM 18972 / AmH).